Consider the following 394-residue polypeptide: ATP phosphoribosyltransferase regulatory subunit (394 aa).

This sequence belongs to the class-II aminoacyl-tRNA synthetase family. HisZ subfamily. As to quaternary structure, heteromultimer composed of HisG and HisZ subunits.

The protein resides in the cytoplasm. It participates in amino-acid biosynthesis; L-histidine biosynthesis; L-histidine from 5-phospho-alpha-D-ribose 1-diphosphate: step 1/9. Functionally, required for the first step of histidine biosynthesis. May allow the feedback regulation of ATP phosphoribosyltransferase activity by histidine. The polypeptide is ATP phosphoribosyltransferase regulatory subunit (Pseudomonas aeruginosa (strain LESB58)).